A 1513-amino-acid chain; its full sequence is Exo-beta-1,6-galactobiohydrolase (1513 aa).

A signal peptide spans Met-1–Ala-31. Residues Val-666–Arg-801 enclose the Ricin B-type lectin domain. F5/8 type C domains are found at residues Ala-965–Thr-1112 and Gly-1116–Gln-1273. The interval Val-1456–Asn-1480 is disordered. Residues Pro-1465 to Asn-1480 show a composition bias toward polar residues. The chain crosses the membrane as a helical span at residues Val-1489–Leu-1509.

Belongs to the glycosyl hydrolase 30 family.

The protein localises to the cell membrane. It catalyses the reaction Hydrolysis of (1-&gt;6)-beta-D-galactosidic linkages in arabinogalactan proteins and (1-&gt;3):(1-&gt;6)-beta-galactans to yield (1-&gt;6)-beta-galactobiose as the final product.. In terms of biological role, involved in the type II arabinogalactan (AG) side chains degradation. Specifically releases the non-reducing terminal beta-1,6-galactobiose (beta-1,6-Gal2) from both dearabinosylated larch AG and polymeric beta-1,6-galactan chains by an exo-mode of action. Shows lower activity with larch AG, and very weak activity with dearabinosylated gum arabic, gum arabic and potato galactan. Can probably release beta-1,6-Gal2 from the internal side chains of type II AG. The polypeptide is Exo-beta-1,6-galactobiohydrolase (Bifidobacterium longum subsp. longum (strain ATCC 15707 / DSM 20219 / JCM 1217 / NCTC 11818 / E194b)).